The chain runs to 873 residues: K(+)/H(+) antiporter 1 (873 aa).

At 1 to 23 the chain is on the extracellular side; that stretch reads MANTVGGILSGVNPFHYNSSSPL. Residues 24–44 form a helical membrane-spanning segment; sequence TLFLFQACLILLVCNLIHIPF. Topologically, residues 45–51 are cytoplasmic; sequence SMMRQPK. A helical transmembrane segment spans residues 52–72; that stretch reads VISEVISGVILGPTIFGQIPN. The Extracellular portion of the chain corresponds to 73 to 82; that stretch reads YTNTIFPTSS. Residues 83 to 103 traverse the membrane as a helical segment; the sequence is IPGLNLVANLGIILFMFFLGL. Over 104–116 the chain is Cytoplasmic; the sequence is EVDIAFIKKHLKK. The helical transmembrane segment at 117–137 threads the bilayer; that stretch reads ALVIGIVTLAVPFGFGCLLAI. At 138–154 the chain is on the extracellular side; it reads PLFHTYANKTEGERHIK. Residues 155 to 175 form a helical membrane-spanning segment; the sequence is FSVFMVFIAVSISVTAFPVLC. The Cytoplasmic segment spans residues 176–188; that stretch reads RILNELRLIKDRA. The helical transmembrane segment at 189-209 threads the bilayer; the sequence is GIVVLAAGIINDIMGWILLAL. The Extracellular portion of the chain corresponds to 210–220; the sequence is SIILSSAEGSP. The chain crosses the membrane as a helical span at residues 221–241; sequence VNTVYILLITFAWFLIYFFPL. Residues 242–267 lie on the Cytoplasmic side of the membrane; the sequence is KYLLRWVLIRTHELDRSKPSPLATMC. Residues 268–288 traverse the membrane as a helical segment; that stretch reads ILFIMFISAYFTDIIGVHPIF. At 289–316 the chain is on the extracellular side; that stretch reads GAFIAGLVVPRDDHYVVKLTERMEDIPN. The helical transmembrane segment at 317–337 threads the bilayer; that stretch reads IVFIPIYFAVAGLNVDLTLLN. Residues 338–341 lie on the Cytoplasmic side of the membrane; sequence EGRD. The helical transmembrane segment at 342 to 362 threads the bilayer; that stretch reads WGYVFATIGIAIFTKIISGTL. Residues 363 to 375 lie on the Extracellular side of the membrane; sequence TAKLTGLFWREAT. A helical transmembrane segment spans residues 376-396; sequence AAGVLMSCKGIVEIVVLTVGL. The Cytoplasmic portion of the chain corresponds to 397–404; it reads NAGIISRK. The helical transmembrane segment at 405–425 threads the bilayer; that stretch reads IFGMFVLMALVSTFVTTPLTQ. At 426-726 the chain is on the extracellular side; the sequence is LVYPDSYRDG…DRFKRKRFNL (301 aa). Ser557 bears the Phosphoserine mark. Lys562 participates in a covalent cross-link: Glycyl lysine isopeptide (Lys-Gly) (interchain with G-Cter in ubiquitin). A helical transmembrane segment spans residues 727–747; that stretch reads LLPKPYLTQSDYLGLYLLLLI. Residues 748–873 are Cytoplasmic-facing; the sequence is CYRDGYNNDN…TLIVHHFSSE (126 aa).

Belongs to the monovalent cation:proton antiporter 2 (CPA2) transporter (TC 2.A.37) family.

The protein localises to the membrane. Potassium-proton antiport. The protein is K(+)/H(+) antiporter 1 (KHA1) of Saccharomyces cerevisiae (strain ATCC 204508 / S288c) (Baker's yeast).